Consider the following 1377-residue polypeptide: Temperature-sensitive hemagglutinin tsh autotransporter (1377 aa).

Residues 1–52 (MNRIYSLRYSAVARGFIAVSEFARKCVHKSVRRLCFPVLLLIPVLFSAGSLA) form the signal peptide. Positions 53-302 (GTVNNELGYQ…AVIPLDFIGQ (250 aa)) constitute a Peptidase S6 domain. Residues H125, D153, and S259 each act as charge relay system in the active site. The Autotransporter domain maps to 1111-1377 (DINGEAGTWV…AINANIRYSF (267 aa)).

In terms of processing, the C-terminus is blocked. Cleaved to release the mature protein from the outer membrane.

It is found in the periplasm. It localises to the secreted. Its subcellular location is the cell surface. The protein localises to the cell outer membrane. Functionally, contributes to the development of lesions and deposition of fibrin in the avian air sacs. It can act both as an adhesin and as a serine protease. Agglutinates erythrocytes while in contact with the extracellular surface of the bacterial cells. Can adhere to purified hemoglobin and bind with great efficiency to extracellular matrix proteins. Cleaves casein and exhibits mucinolytic activity. In Escherichia coli, this protein is Temperature-sensitive hemagglutinin tsh autotransporter (tsh).